Here is a 234-residue protein sequence, read N- to C-terminus: Transcriptional regulatory protein WalR (234 aa).

In terms of domain architecture, Response regulatory spans 3–116 (KILIVDDEKP…ELQARVKALL (114 aa)). A 4-aspartylphosphate modification is found at D52. The ompR/PhoB-type DNA-binding region spans 133 to 232 (PQPIQIGDLE…RRGVGYYMRN (100 aa)).

In terms of assembly, monomer. Homodimer. Phosphorylated by WalK; can also be dephosphorylated by WalK.

The protein localises to the cytoplasm. Member of the two-component regulatory system WalK/WalR that regulates genes involved in cell wall metabolism. Binds to the promoter region of the transcription factor fabT gene in the fabTH-acp operon in vitro. Inhibits transcription of fabT, probably acting in an unphosphorylated form, thereby playing a role in the regulation of fatty acid biosynthesis. Essential for normal growth in vitro. Required for maintaining normal cellular morphology, acting, at least in part, by regulating peptidoglycan hydrolase pcsB. Involved in maintaining expression of WalRK regulon genes in exponentially growing cells. This chain is Transcriptional regulatory protein WalR, found in Streptococcus pneumoniae serotype 2 (strain D39 / NCTC 7466).